The primary structure comprises 313 residues: Caffeic acid 3-O-methyltransferase (313 aa).

112–118 lines the substrate pocket; it reads IDQDRVF. Residues 144 to 162 are substrate binding; that stretch reads AFDYPGTDPRFNKIFNRAM. Residues Gly-190, Asp-213, Asp-233, Met-234, and Lys-247 each contribute to the S-adenosyl-L-methionine site. Catalysis depends on His-251, which acts as the Proton acceptor.

The protein belongs to the class I-like SAM-binding methyltransferase superfamily. Cation-independent O-methyltransferase family. COMT subfamily. In terms of assembly, homodimer.

The enzyme catalyses (E)-caffeate + S-adenosyl-L-methionine = (E)-ferulate + S-adenosyl-L-homocysteine + H(+). The protein operates within aromatic compound metabolism; phenylpropanoid biosynthesis. In terms of biological role, catalyzes the conversion of caffeic acid to ferulic acid and of 5-hydroxyferulic acid to sinapic acid. The resulting products may subsequently be converted to the corresponding alcohols that are incorporated into lignins. The sequence is that of Caffeic acid 3-O-methyltransferase (COMT1) from Eucalyptus globulus (Tasmanian blue gum).